Reading from the N-terminus, the 379-residue chain is Dual-specificity RNA methyltransferase RlmN (379 aa).

Glu-95 (proton acceptor) is an active-site residue. In terms of domain architecture, Radical SAM core spans 101–345 (EETRGTLCVS…TTVRKTRGDD (245 aa)). Cys-108 and Cys-350 form a disulfide bridge. Positions 115, 119, and 122 each coordinate [4Fe-4S] cluster. S-adenosyl-L-methionine-binding positions include 176 to 177 (GE), Ser-208, 230 to 232 (SLH), and Asn-307. Residue Cys-350 is the S-methylcysteine intermediate of the active site.

The protein belongs to the radical SAM superfamily. RlmN family. It depends on [4Fe-4S] cluster as a cofactor.

The protein localises to the cytoplasm. It catalyses the reaction adenosine(2503) in 23S rRNA + 2 reduced [2Fe-2S]-[ferredoxin] + 2 S-adenosyl-L-methionine = 2-methyladenosine(2503) in 23S rRNA + 5'-deoxyadenosine + L-methionine + 2 oxidized [2Fe-2S]-[ferredoxin] + S-adenosyl-L-homocysteine. The enzyme catalyses adenosine(37) in tRNA + 2 reduced [2Fe-2S]-[ferredoxin] + 2 S-adenosyl-L-methionine = 2-methyladenosine(37) in tRNA + 5'-deoxyadenosine + L-methionine + 2 oxidized [2Fe-2S]-[ferredoxin] + S-adenosyl-L-homocysteine. Its function is as follows. Specifically methylates position 2 of adenine 2503 in 23S rRNA and position 2 of adenine 37 in tRNAs. m2A2503 modification seems to play a crucial role in the proofreading step occurring at the peptidyl transferase center and thus would serve to optimize ribosomal fidelity. The chain is Dual-specificity RNA methyltransferase RlmN from Burkholderia vietnamiensis (strain G4 / LMG 22486) (Burkholderia cepacia (strain R1808)).